The primary structure comprises 84 residues: Small ribosomal subunit protein uS17 (84 aa).

The protein belongs to the universal ribosomal protein uS17 family. Part of the 30S ribosomal subunit.

Functionally, one of the primary rRNA binding proteins, it binds specifically to the 5'-end of 16S ribosomal RNA. The sequence is that of Small ribosomal subunit protein uS17 from Clostridium perfringens (strain SM101 / Type A).